Consider the following 446-residue polypeptide: Tryptophan synthase beta chain 2 (446 aa).

An N6-(pyridoxal phosphate)lysine modification is found at Lys110.

This sequence belongs to the TrpB family. In terms of assembly, tetramer of two alpha and two beta chains. It depends on pyridoxal 5'-phosphate as a cofactor.

It carries out the reaction (1S,2R)-1-C-(indol-3-yl)glycerol 3-phosphate + L-serine = D-glyceraldehyde 3-phosphate + L-tryptophan + H2O. It functions in the pathway amino-acid biosynthesis; L-tryptophan biosynthesis; L-tryptophan from chorismate: step 5/5. In terms of biological role, the beta subunit is responsible for the synthesis of L-tryptophan from indole and L-serine. The chain is Tryptophan synthase beta chain 2 (trpB2) from Pyrococcus furiosus (strain ATCC 43587 / DSM 3638 / JCM 8422 / Vc1).